We begin with the raw amino-acid sequence, 317 residues long: Zinc finger protein CRM3 (317 aa).

A compositionally biased stretch (low complexity) spans 1–15 (MNFSLSKQSSEKQSS). The segment at 1–22 (MNFSLSKQSSEKQSSYTDKSRS) is disordered. C2H2-type zinc fingers lie at residues 254-276 (KQCPVCGKICSRPSTLKTHYLIH) and 282-306 (FKCTWEGCTKSFNVKSNMLRHLKSH).

Its subcellular location is the nucleus. Functionally, probable transcription factor involved in the regulation of the transcription of genes involved in cell rescue and defense, as well as cell cycle and DNA processing. The protein is Zinc finger protein CRM3 of Saccharomyces cerevisiae (strain ATCC 204508 / S288c) (Baker's yeast).